Consider the following 821-residue polypeptide: Ent-pimara-8(14),15-diene synthase (821 aa).

The Mg(2+) site is built by D556, D560, N701, T705, and E709. The short motif at 556 to 560 (DDFFD) is the DDXXD motif element.

This sequence belongs to the terpene synthase family. It depends on Mg(2+) as a cofactor. In terms of tissue distribution, highly expressed in roots, at intermediate levels in stems and at lower levels in leaves.

The catalysed reaction is ent-copalyl diphosphate = ent-pimara-8(14),15-diene + diphosphate. It functions in the pathway secondary metabolite biosynthesis; terpenoid biosynthesis. Functionally, involved in the biosynthesis of ent-kaurene diterpenoids natural products. Catalyzes the conversion of ent-copalyl diphosphate to ent-pimara-8(14),15-diene. The protein is Ent-pimara-8(14),15-diene synthase of Oryza sativa subsp. japonica (Rice).